Reading from the N-terminus, the 752-residue chain is Catalase-peroxidase (752 aa).

Residues 1–21 (MSNESKCPFHQTAGGGTTNRD) form a disordered region. Positions 91–245 (WHSAGTYRIG…LAAVQMGLIY (155 aa)) form a cross-link, tryptophyl-tyrosyl-methioninium (Trp-Tyr) (with M-271). H92 serves as the catalytic Proton acceptor. The disordered stretch occupies residues 204–228 (QAPGQGDLVAEPAKHGEEQNRDLSA). Basic and acidic residues predominate over residues 215–228 (PAKHGEEQNRDLSA). The segment at residues 245-271 (YVNPEGPEGNPDPVASGKDIRETFGRM) is a cross-link (tryptophyl-tyrosyl-methioninium (Tyr-Met) (with W-91)). Residue H286 participates in heme binding. The disordered stretch occupies residues 366-391 (AHQWQPKEGKGAGTVPDAHDPSKRHA).

The protein belongs to the peroxidase family. Peroxidase/catalase subfamily. Homodimer or homotetramer. Heme b is required as a cofactor. In terms of processing, formation of the three residue Trp-Tyr-Met cross-link is important for the catalase, but not the peroxidase activity of the enzyme.

The catalysed reaction is H2O2 + AH2 = A + 2 H2O. The enzyme catalyses 2 H2O2 = O2 + 2 H2O. Bifunctional enzyme with both catalase and broad-spectrum peroxidase activity. The sequence is that of Catalase-peroxidase from Pseudomonas putida (strain W619).